The sequence spans 253 residues: Hydroxyacylglutathione hydrolase (253 aa).

Zn(2+) contacts are provided by H54, H56, D58, H59, H110, D127, and H165.

This sequence belongs to the metallo-beta-lactamase superfamily. Glyoxalase II family. In terms of assembly, monomer. Requires Zn(2+) as cofactor.

It catalyses the reaction an S-(2-hydroxyacyl)glutathione + H2O = a 2-hydroxy carboxylate + glutathione + H(+). It participates in secondary metabolite metabolism; methylglyoxal degradation; (R)-lactate from methylglyoxal: step 2/2. Its function is as follows. Thiolesterase that catalyzes the hydrolysis of S-D-lactoyl-glutathione to form glutathione and D-lactic acid. The polypeptide is Hydroxyacylglutathione hydrolase (Idiomarina loihiensis (strain ATCC BAA-735 / DSM 15497 / L2-TR)).